Consider the following 444-residue polypeptide: Nuclear envelope integral membrane protein 1 (444 aa).

Residues 1–43 (MAGGMKVAVSPAVGPGPWGSGVGGGGTVRLLLILSGCLVYGTA) form the signal peptide. N-linked (GlcNAc...) asparagine glycosylation is present at Asn125. Transmembrane regions (helical) follow at residues 161 to 181 (PKLF…DLLS), 186 to 206 (FYYS…IIFI), 216 to 236 (PIYV…QLVF), 245 to 265 (CYWQ…FAVC), and 289 to 309 (LCFM…IIIA). The segment at 186-297 (FYYSTGMSVG…GLCFMYSGIQ (112 aa)) is a; required for its colocalization with lamins at the nuclear envelope. Residues 336–405 (PVPPRLLTEE…LTPNEVSVHE (70 aa)) are b; required for interaction with RAN-GTP. Residues 336–444 (PVPPRLLTEE…PAITQNNFLT (109 aa)) form a required for nuclear localization region. Phosphoserine occurs at positions 368, 424, and 425.

It belongs to the NEMP family. In terms of assembly, homooligomer. Interacts with RAN-GTP. Interacts with EMD. In terms of processing, phosphorylation may regulate its interaction with RAN-GTP.

It localises to the nucleus inner membrane. The protein localises to the nucleus envelope. Its function is as follows. Together with EMD, contributes to nuclear envelope stiffness in germ cells. Required for female fertility. Essential for normal erythropoiesis. Required for efficient nuclear envelope opening and enucleation during the late stages of erythroblast maturation. The protein is Nuclear envelope integral membrane protein 1 (NEMP1) of Pongo abelii (Sumatran orangutan).